Consider the following 490-residue polypeptide: MEHPLEIYNTLHRKKERFEPIHKPHVGLYVCGPTVYGDAHLGHARPAITFDLLYRYLRHLGYQVRYVRNITDVGHLEHDADEGEDKIAKKARLEQLEPMEVVQYYLTRYRHAMEALNVLPPSIEPMASGHIIEQIELVKQILKAGYAYESCGSVYFDVEKYNQDHRYGVLSGRNIEEMINNTRRLDGQDEKRNGVDFALWKAAQPEHIMRWPSPWGMGFPGWHCECTAMGRKYLGEEFDIHGGGMDLVFPHHECEIAQAVASQGHPIVRYWMHNNMITINGQKMGKSLGNFITLEEFFSGAHPSLNKAYSPMTIRFFILGAHYRGTVDFSNEALEAAEKGLERLLDAAALLDGLKTADTTSVEVGDLRKRCYDAMNDDLNSPMVIAALFDAARAINAVHNGQGTITSSNLEELRTTFRLFLFDLLGMRDERASSAGGSEAFGKAMDLLLSIRAEAKARKDWATSDKIRDELTALGFTIKDTKDGAEWKLN.

Residue Cys31 participates in Zn(2+) binding. Residues 33 to 43 (PTVYGDAHLGH) carry the 'HIGH' region motif. Residues Cys226, His251, and Glu255 each coordinate Zn(2+). A 'KMSKS' region motif is present at residues 283–287 (KMGKS). Lys286 is an ATP binding site.

It belongs to the class-I aminoacyl-tRNA synthetase family. As to quaternary structure, monomer. It depends on Zn(2+) as a cofactor.

The protein localises to the cytoplasm. The enzyme catalyses tRNA(Cys) + L-cysteine + ATP = L-cysteinyl-tRNA(Cys) + AMP + diphosphate. The chain is Cysteine--tRNA ligase from Porphyromonas gingivalis (strain ATCC BAA-308 / W83).